The sequence spans 277 residues: Uridine-cytidine kinase 1 (277 aa).

Residue 24-32 (GGTASGKST) participates in ATP binding. Substrate is bound by residues aspartate 81, tyrosine 109, histidine 114, arginine 163, arginine 172, and glutamine 180. Residue aspartate 209 participates in ATP binding. Positions 241–277 (NHGRSLKRGVAEHGENPSGSSSNLTKRPLLEPSTRPH) are disordered.

Belongs to the uridine kinase family.

The catalysed reaction is uridine + ATP = UMP + ADP + H(+). It catalyses the reaction cytidine + ATP = CMP + ADP + H(+). Its pathway is pyrimidine metabolism; CTP biosynthesis via salvage pathway; CTP from cytidine: step 1/3. The protein operates within pyrimidine metabolism; UMP biosynthesis via salvage pathway; UMP from uridine: step 1/1. Its function is as follows. Phosphorylates uridine and cytidine to uridine monophosphate and cytidine monophosphate. Does not phosphorylate deoxyribonucleosides or purine ribonucleosides. Can use ATP or GTP as a phosphate donor. The sequence is that of Uridine-cytidine kinase 1 (uck1) from Danio rerio (Zebrafish).